The primary structure comprises 119 residues: UPF0102 protein FP2501 (119 aa).

Belongs to the UPF0102 family.

The protein is UPF0102 protein FP2501 of Flavobacterium psychrophilum (strain ATCC 49511 / DSM 21280 / CIP 103535 / JIP02/86).